A 152-amino-acid polypeptide reads, in one-letter code: Synaptobrevin (152 aa).

The segment covering 1–16 (MENNEAPSPSGSNNND) has biased composition (polar residues). Residues 1–30 (MENNEAPSPSGSNNNDFPILPPPPNANDNY) form a disordered region. The Cytoplasmic segment spans residues 1–110 (MENNEAPSPS…KRKQWWANMK (110 aa)). In terms of domain architecture, v-SNARE coiled-coil homology spans 47-107 (KLQQTQAKVD…GKLKRKQWWA (61 aa)). The helical; Anchor for type IV membrane protein transmembrane segment at 111-130 (MMIILGVIAVVLLIIVLVSV) threads the bilayer. At 131–152 (WPSSSDSGSGGGNKAITQAPPH) the chain is on the vesicular side. Residues 133–152 (SSSDSGSGGGNKAITQAPPH) form a disordered region.

Belongs to the synaptobrevin family. Part of the SNARE core complex containing Snap25 and syntaxin. Post-translationally, ubiquitinated by gzl, regulating endocytic trafficking. In wing imaginal disks, ubiquitination by gzl promotes transcytosis of wingless (wg) to the basolateral surface. Not nervous system-specific; abundant in cells of the gut and Malpighian tubules.

It is found in the cytoplasmic vesicle. The protein resides in the secretory vesicle. Its subcellular location is the synaptic vesicle membrane. It localises to the cell membrane. Functionally, involved in the targeting and/or fusion of transport vesicles to their target membrane. The polypeptide is Synaptobrevin (Drosophila melanogaster (Fruit fly)).